A 305-amino-acid polypeptide reads, in one-letter code: HPr kinase/phosphorylase (305 aa).

Residues His-136 and Lys-157 contribute to the active site. Residue 151-158 participates in ATP binding; sequence GESGIGKS. Mg(2+) is bound at residue Ser-158. Asp-175 serves as the catalytic Proton acceptor; for phosphorylation activity. Proton donor; for dephosphorylation activity. An important for the catalytic mechanism of both phosphorylation and dephosphorylation region spans residues 198 to 207; the sequence is LEVRGLGIID. Glu-199 contacts Mg(2+). Arg-240 is an active-site residue. An important for the catalytic mechanism of dephosphorylation region spans residues 261–266; sequence PIRPGR.

It belongs to the HPrK/P family. Homohexamer. Mg(2+) is required as a cofactor.

The catalysed reaction is [HPr protein]-L-serine + ATP = [HPr protein]-O-phospho-L-serine + ADP + H(+). It carries out the reaction [HPr protein]-O-phospho-L-serine + phosphate + H(+) = [HPr protein]-L-serine + diphosphate. Its function is as follows. Catalyzes the ATP- as well as the pyrophosphate-dependent phosphorylation of a specific serine residue in HPr, a phosphocarrier protein of the phosphoenolpyruvate-dependent sugar phosphotransferase system (PTS). HprK/P also catalyzes the pyrophosphate-producing, inorganic phosphate-dependent dephosphorylation (phosphorolysis) of seryl-phosphorylated HPr (P-Ser-HPr). The two antagonistic activities of HprK/P are regulated by several intracellular metabolites, which change their concentration in response to the absence or presence of rapidly metabolisable carbon sources (glucose, fructose, etc.) in the growth medium. Therefore, by controlling the phosphorylation state of HPr, HPrK/P is a sensor enzyme that plays a major role in the regulation of carbon metabolism and sugar transport: it mediates carbon catabolite repression (CCR), and regulates PTS-catalyzed carbohydrate uptake and inducer exclusion. The polypeptide is HPr kinase/phosphorylase (Clostridium tetani (strain Massachusetts / E88)).